A 504-amino-acid chain; its full sequence is Maturase K (504 aa).

This sequence belongs to the intron maturase 2 family. MatK subfamily.

It is found in the plastid. The protein resides in the chloroplast. In terms of biological role, usually encoded in the trnK tRNA gene intron. Probably assists in splicing its own and other chloroplast group II introns. The chain is Maturase K from Nepenthes gracilis (Slender pitcher plant).